Here is a 401-residue protein sequence, read N- to C-terminus: MELRATVENRIRYSTKHIKHLPPGSITEFDWKDYCPVGFGLIQELEGIDHDDYLLSICTDETLKKISSGKIGNVFHISNDNRFLIKILRKSEIKVTLEMLPRYYRHINYHRSSLFTRIFGAHSVKPLGGVKTYFAVMSNMLHSTIFVNKLYDLKGSPKGRSNKKIEVRNTTVLKDIDFDFCFYVDPLARQRIIKQTKLDCELLEEEGIMDYSLLVGLQSKGSCQGSLDGLNPVYGSFAPPSSFKSNSTKSMKTASSSPDRSSVAMYSCSPDRDSVENEMSMTIQSVTSNSASSETNILATTLSDLFHNSSNINFGMKIPARARRVTRETGEEEWYNVVLYIGIVDTFQDYGMKKRIEHCYKSIQYNSNSISTVHPKIYSSRFQDFVSNIFLPHDDDLSSKY.

Residues 1 to 390 (MELRATVENR…RFQDFVSNIF (390 aa)) form the PIPK domain. Residues 242 to 260 (SFKSNSTKSMKTASSSPDR) are compositionally biased toward polar residues. The tract at residues 242 to 268 (SFKSNSTKSMKTASSSPDRSSVAMYSC) is disordered. Residues 350–371 (YGMKKRIEHCYKSIQYNSNSIS) are activation loop.

The enzyme catalyses a 1,2-diacyl-sn-glycero-3-phospho-(1D-myo-inositol 4-phosphate) + ATP = a 1,2-diacyl-sn-glycero-3-phospho-(1D-myo-inositol-4,5-bisphosphate) + ADP + H(+). This is Putative phosphatidylinositol 4-phosphate 5-kinase 11 (PIP5K11) from Arabidopsis thaliana (Mouse-ear cress).